The following is a 154-amino-acid chain: Transcription antitermination protein NusB (154 aa).

The protein belongs to the NusB family.

Involved in transcription antitermination. Required for transcription of ribosomal RNA (rRNA) genes. Binds specifically to the boxA antiterminator sequence of the ribosomal RNA (rrn) operons. In Bordetella parapertussis (strain 12822 / ATCC BAA-587 / NCTC 13253), this protein is Transcription antitermination protein NusB.